The sequence spans 946 residues: Bifunctional glutamine synthetase adenylyltransferase/adenylyl-removing enzyme (946 aa).

The interval 1 to 440 (MKPLSSPLQQ…VFNELIGDDE (440 aa)) is adenylyl removase. The segment at 449 to 946 (SEQWRELWQD…ASWQKWLVEE (498 aa)) is adenylyl transferase.

Belongs to the GlnE family. Mg(2+) serves as cofactor.

It catalyses the reaction [glutamine synthetase]-O(4)-(5'-adenylyl)-L-tyrosine + phosphate = [glutamine synthetase]-L-tyrosine + ADP. The catalysed reaction is [glutamine synthetase]-L-tyrosine + ATP = [glutamine synthetase]-O(4)-(5'-adenylyl)-L-tyrosine + diphosphate. Involved in the regulation of glutamine synthetase GlnA, a key enzyme in the process to assimilate ammonia. When cellular nitrogen levels are high, the C-terminal adenylyl transferase (AT) inactivates GlnA by covalent transfer of an adenylyl group from ATP to specific tyrosine residue of GlnA, thus reducing its activity. Conversely, when nitrogen levels are low, the N-terminal adenylyl removase (AR) activates GlnA by removing the adenylyl group by phosphorolysis, increasing its activity. The regulatory region of GlnE binds the signal transduction protein PII (GlnB) which indicates the nitrogen status of the cell. The chain is Bifunctional glutamine synthetase adenylyltransferase/adenylyl-removing enzyme from Escherichia coli O7:K1 (strain IAI39 / ExPEC).